A 317-amino-acid polypeptide reads, in one-letter code: Ribosomal RNA small subunit methyltransferase H (317 aa).

Residues 39–41 (GGH), Asp-59, Phe-83, Asp-104, and Gln-111 contribute to the S-adenosyl-L-methionine site.

It belongs to the methyltransferase superfamily. RsmH family.

The protein localises to the cytoplasm. It catalyses the reaction cytidine(1402) in 16S rRNA + S-adenosyl-L-methionine = N(4)-methylcytidine(1402) in 16S rRNA + S-adenosyl-L-homocysteine + H(+). Functionally, specifically methylates the N4 position of cytidine in position 1402 (C1402) of 16S rRNA. This Paraburkholderia xenovorans (strain LB400) protein is Ribosomal RNA small subunit methyltransferase H.